We begin with the raw amino-acid sequence, 128 residues long: Large ribosomal subunit protein uL22 (128 aa).

The interval Met1–Ser22 is disordered. Residues Ile9 to Pro21 show a composition bias toward basic and acidic residues.

The protein belongs to the universal ribosomal protein uL22 family. Part of the 50S ribosomal subunit.

Functionally, this protein binds specifically to 23S rRNA; its binding is stimulated by other ribosomal proteins, e.g. L4, L17, and L20. It is important during the early stages of 50S assembly. It makes multiple contacts with different domains of the 23S rRNA in the assembled 50S subunit and ribosome. Its function is as follows. The globular domain of the protein is located near the polypeptide exit tunnel on the outside of the subunit, while an extended beta-hairpin is found that lines the wall of the exit tunnel in the center of the 70S ribosome. This chain is Large ribosomal subunit protein uL22, found in Lachnoclostridium phytofermentans (strain ATCC 700394 / DSM 18823 / ISDg) (Clostridium phytofermentans).